A 319-amino-acid chain; its full sequence is Chromoplast-specific carotenoid-associated protein C2, chromoplastic (319 aa).

The transit peptide at 1-55 (MTSIAFCNAFTVNPFLAAARRSPPPLTPLTSVALSPARKPRILAIFHPRTFPSFR) directs the protein to the chromoplast.

This sequence belongs to the PAP/fibrillin family.

The protein localises to the plastid. It localises to the chromoplast. Functionally, may be involved in carotenoid sequestration within chromoplasts. The protein is Chromoplast-specific carotenoid-associated protein C2, chromoplastic (CHRC2) of Oncidium hybrid cultivar (Orchid).